The following is a 315-amino-acid chain: DNA-directed RNA polymerase subunit alpha (315 aa).

Residues 1-228 (MLEIEKPIIE…EHFKLFMSLT (228 aa)) form an alpha N-terminal domain (alpha-NTD) region. The segment at 245–315 (KEKVLEMTVE…LGLCLKLNDE (71 aa)) is alpha C-terminal domain (alpha-CTD).

It belongs to the RNA polymerase alpha chain family. In terms of assembly, homodimer. The RNAP catalytic core consists of 2 alpha, 1 beta, 1 beta' and 1 omega subunit. When a sigma factor is associated with the core the holoenzyme is formed, which can initiate transcription.

It catalyses the reaction RNA(n) + a ribonucleoside 5'-triphosphate = RNA(n+1) + diphosphate. Its function is as follows. DNA-dependent RNA polymerase catalyzes the transcription of DNA into RNA using the four ribonucleoside triphosphates as substrates. This is DNA-directed RNA polymerase subunit alpha from Clostridium botulinum (strain Alaska E43 / Type E3).